The following is a 172-amino-acid chain: Ribosome maturation factor RimM (172 aa).

In terms of domain architecture, PRC barrel spans 97–170 (ENEFYFHEII…KITIEVMEGL (74 aa)).

It belongs to the RimM family. Binds ribosomal protein uS19.

Its subcellular location is the cytoplasm. Functionally, an accessory protein needed during the final step in the assembly of 30S ribosomal subunit, possibly for assembly of the head region. Essential for efficient processing of 16S rRNA. May be needed both before and after RbfA during the maturation of 16S rRNA. It has affinity for free ribosomal 30S subunits but not for 70S ribosomes. The protein is Ribosome maturation factor RimM of Listeria innocua serovar 6a (strain ATCC BAA-680 / CLIP 11262).